We begin with the raw amino-acid sequence, 294 residues long: Transcription termination/antitermination protein NusG (294 aa).

Residues Met1 to Asp91 form a disordered region. The segment covering Asp25–Glu39 has biased composition (acidic residues). Over residues Ala40–Ala53 the composition is skewed to low complexity. Over residues Asp59–Glu85 the composition is skewed to acidic residues.

This sequence belongs to the NusG family.

In terms of biological role, participates in transcription elongation, termination and antitermination. This is Transcription termination/antitermination protein NusG from Streptomyces griseus.